An 836-amino-acid polypeptide reads, in one-letter code: Hypoxia-inducible factor 1-alpha (836 aa).

Residues 1–30 are disordered; the sequence is MEGAGGENEKKKMSSERRKEKSRDAARSRR. Residues 1–401 form an interaction with TSGA10 region; the sequence is MEGAGGENEK…KEPDALTLLA (401 aa). Over residues 7–30 the composition is skewed to basic and acidic residues; the sequence is ENEKKKMSSERRKEKSRDAARSRR. A bHLH domain is found at 17–70; sequence RRKEKSRDAARSRRSKESEVFYELAHQLPLPHNVSSHLDKASVMRLTISYLRVR. A DNA-binding region spans residues 21–30; the sequence is KSRDAARSRR. In terms of domain architecture, PAS 1 spans 80-155; sequence SEDEMKAQMD…EMLTHRNGPV (76 aa). The required for heterodimer formation with ARNT stretch occupies residues 170-191; the sequence is RMKCTLTSRGRTMNIKSATWKV. Residues 228-298 form the PAS 2 domain; the sequence is PHPSNIEIPL…KTHHDMFTKG (71 aa). At Ser-247 the chain carries Phosphoserine; by CK1. One can recognise a PAC domain in the interval 302–345; the sequence is TGQYRMLAKRGGYVWVETQATVIYNTKNSQPQCIVCVNYVVSGI. An N-terminal VHL recognition site region spans residues 380 to 417; sequence SEDTSCLFDKLKKEPDALTLLAPAAGDTIISLDFGSDD. Lys-391 is covalently cross-linked (Glycyl lysine isopeptide (Lys-Gly) (interchain with G-Cter in SUMO)). The tract at residues 401-613 is ODD; that stretch reads APAAGDTIIS…PSMSTVTGFQ (213 aa). Pro-402 is subject to 4-hydroxyproline. Lys-476 is covalently cross-linked (Glycyl lysine isopeptide (Lys-Gly) (interchain with G-Cter in SUMO)). A disordered region spans residues 492 to 511; sequence QIQDQPASPSDGSTRQSSPE. The NTAD stretch occupies residues 544 to 588; sequence FKLELVEKLFAEDTEAKNPFSTQDTDLDLEMLAPYIPMDDDFQLR. Lys-545 is modified (N6-acetyllysine; alternate). Residues Lys-545, Lys-551, and Lys-560 each participate in a glycyl lysine isopeptide (Lys-Gly) (interchain with G-Cter in ubiquitin) cross-link. Lys-545 is covalently cross-linked (Glycyl lysine isopeptide (Lys-Gly) (interchain with G-Cter in ubiquitin); alternate). Residue Ser-564 is modified to Phosphoserine; by GSK3-beta. Residue Thr-568 is modified to Phosphothreonine; by GSK3-beta. The interval 569–585 is C-terminal VHL recognition site; it reads DLDLEMLAPYIPMDDDF. Pro-577 carries the post-translational modification 4-hydroxyproline. A Phosphoserine; by PLK3 modification is found at Ser-589. Residues 589–795 are ID; sequence SFDQLSPLES…SDLACRLLGQ (207 aa). Disordered regions lie at residues 593–684 and 707–734; these read LSPL…DRAG and QRNTVPEEELNPKTIASQNAQRKRKMEH. Ser-602 carries the phosphoserine; by GSK3-beta modification. The segment covering 608–620 has biased composition (polar residues); that stretch reads TVTGFQQTQLQKP. Residues 621 to 632 are compositionally biased toward low complexity; sequence TITATATTTATT. Residues 633-647 are compositionally biased toward basic and acidic residues; that stretch reads DESKTETKDNKEDIK. A compositionally biased stretch (polar residues) spans 652-678; that stretch reads SPSSTQVPQETTTAKASAYSGTHSRTA. Position 668 is a phosphoserine; by PLK3 (Ser-668). At Lys-719 the chain carries N6-acetyllysine. The Nuclear localization signal motif lies at 728–731; that stretch reads RKRK. Residues 796-836 are CTAD; that stretch reads SMDESGLPQLTSYDCEVNAPIQGSRNLLQGEELLRALDQVN. At Cys-810 the chain carries S-nitrosocysteine. At Asn-813 the chain carries (3S)-3-hydroxyasparagine.

Interacts with the ARNT; forms a heterodimer that binds core DNA sequence 5'-TACGTG-3' within the hypoxia response element (HRE) of target gene promoters. Interacts with COPS5; the interaction increases the transcriptional activity of HIF1A through increased stability. Interacts with EP300 (via TAZ-type 1 domains); the interaction is stimulated in response to hypoxia and inhibited by CITED2. Interacts with CREBBP (via TAZ-type 1 domains). Interacts with NCOA1, NCOA2, APEX1 and HSP90. Interacts (hydroxylated within the ODD domain) with VHLL (via beta domain); the interaction, leads to polyubiquitination and subsequent HIF1A proteasomal degradation. During hypoxia, sumoylated HIF1A also binds VHL; the interaction promotes the ubiquitination of HIF1A. Interacts with SENP1; the interaction desumoylates HIF1A resulting in stabilization and activation of transcription. Interacts (via the ODD domain) with NAA10; the interaction appears not to acetylate HIF1A nor have any affect on protein stability, during hypoxia. Interacts with RWDD3; the interaction enhances HIF1A sumoylation. Interacts with TSGA10. Interacts with HIF3A. Interacts with RORA (via the DNA binding domain); the interaction enhances HIF1A transcription under hypoxia through increasing protein stability. Interaction with PSMA7 inhibits the transactivation activity of HIF1A under both normoxic and hypoxia-mimicking conditions. Interacts with USP20. Interacts with RACK1; promotes HIF1A ubiquitination and proteasome-mediated degradation. Interacts (via N-terminus) with USP19. Interacts with SIRT2. Interacts (deacetylated form) with EGLN1. Interacts with CBFA2T3. Interacts with HSP90AA1 and HSP90AB1. Interacts with DCUN1D1; this interaction increases the interaction between VHL and DCUN1D1. Interacts with HIF1AN. In terms of processing, S-nitrosylation of Cys-810 may be responsible for increased recruitment of p300 coactivator necessary for transcriptional activity of HIF-1 complex. Requires phosphorylation for DNA-binding. Phosphorylation at Ser-247 by CSNK1D/CK1 represses kinase activity and impairs ARNT binding. Phosphorylation by GSK3-beta and PLK3 promote degradation by the proteasome. Post-translationally, sumoylated; with SUMO1 under hypoxia. Sumoylation is enhanced through interaction with RWDD3. Both sumoylation and desumoylation seem to be involved in the regulation of its stability during hypoxia. Sumoylation can promote either its stabilization or its VHL-dependent degradation by promoting hydroxyproline-independent HIF1A-VHL complex binding, thus leading to HIF1A ubiquitination and proteasomal degradation. Desumoylation by SENP1 increases its stability amd transcriptional activity. There is a disaccord between various publications on the effect of sumoylation and desumoylation on its stability and transcriptional activity. In terms of processing, acetylation of Lys-545 by ARD1 increases interaction with VHL and stimulates subsequent proteasomal degradation. Deacetylation of Lys-719 by SIRT2 increases its interaction with and hydroxylation by EGLN1 thereby inactivating HIF1A activity by inducing its proteasomal degradation. Ubiquitinated; in normoxia, following hydroxylation and interaction with VHL. Lys-545 appears to be the principal site of ubiquitination. Clioquinol, the Cu/Zn-chelator, inhibits ubiquitination through preventing hydroxylation at Asn-813. Ubiquitinated by E3 ligase VHL. Deubiquitinated by UCHL1. Post-translationally, the iron and 2-oxoglutarate dependent 3-hydroxylation of asparagine is (S) stereospecific within HIF CTAD domains. In terms of processing, in normoxia, is hydroxylated on Pro-402 and Pro-577 in the oxygen-dependent degradation domain (ODD) by EGLN1/PHD2 and EGLN2/PHD1. EGLN3/PHD3 has also been shown to hydroxylate Pro-577. The hydroxylated prolines promote interaction with VHL, initiating rapid ubiquitination and subsequent proteasomal degradation. Deubiquitinated by USP20. Under hypoxia, proline hydroxylation is impaired and ubiquitination is attenuated, resulting in stabilization. In normoxia, is hydroxylated on Asn-813 by HIF1AN, thus abrogating interaction with CREBBP and EP300 and preventing transcriptional activation. Repressed by iron ion, via Fe(2+) prolyl hydroxylase (PHD) enzymes-mediated hydroxylation and subsequent proteasomal degradation. Ubiquitous.

The protein resides in the cytoplasm. It localises to the nucleus. It is found in the nucleus speckle. Its activity is regulated as follows. Induced by reactive oxygen species (ROS). Its function is as follows. Functions as a master transcriptional regulator of the adaptive response to hypoxia. Under hypoxic conditions, activates the transcription of over 40 genes, including erythropoietin, glucose transporters, glycolytic enzymes, vascular endothelial growth factor, HILPDA, and other genes whose protein products increase oxygen delivery or facilitate metabolic adaptation to hypoxia. Plays an essential role in embryonic vascularization, tumor angiogenesis and pathophysiology of ischemic disease. Heterodimerizes with ARNT; heterodimer binds to core DNA sequence 5'-TACGTG-3' within the hypoxia response element (HRE) of target gene promoters. Activation requires recruitment of transcriptional coactivators such as CREBBP and EP300. Activity is enhanced by interaction with NCOA1 and/or NCOA2. Interaction with redox regulatory protein APEX1 seems to activate CTAD and potentiates activation by NCOA1 and CREBBP. Involved in the axonal distribution and transport of mitochondria in neurons during hypoxia. This chain is Hypoxia-inducible factor 1-alpha (Hif1a), found in Mus musculus (Mouse).